Reading from the N-terminus, the 49-residue chain is MTPKKRKSKSKKNLRKTNWKKKASKQAIKALAVAKHVLASYNTAEATTN.

The segment at 1–23 is disordered; it reads MTPKKRKSKSKKNLRKTNWKKKA.

It belongs to the bacterial ribosomal protein bL32 family.

The protein localises to the plastid. Its subcellular location is the chloroplast. In Oltmannsiellopsis viridis (Marine flagellate), this protein is Large ribosomal subunit protein bL32c.